A 433-amino-acid chain; its full sequence is KICSTOR complex protein ITFG2 (433 aa).

Residues 19–48 form an FG-GAP 1; atypical repeat; sequence FPHAICLGDVDNDTLNELVVGDTSGKVSVY. S104 is subject to Phosphoserine. The FG-GAP 2; atypical repeat unit spans residues 126–155; it reads NTKVMLISDIDGDGCRELVVGYTDRVVRAF. Position 220 is a phosphoserine (S220).

Part of the KICSTOR complex composed of KPTN, ITFG2, KICS2 and SZT2. SZT2 probably serves as a link between the other three proteins in the KICSTOR complex and may mediate the direct interaction with the GATOR complex via GATOR1. The KICSTOR complex interacts directly with the GATOR1 complex and most probably indirectly with the GATOR2 complex in an amino acid-independent manner.

The protein localises to the lysosome membrane. Its function is as follows. As part of the KICSTOR complex functions in the amino acid-sensing branch of the TORC1 signaling pathway. Recruits, in an amino acid-independent manner, the GATOR1 complex to the lysosomal membranes and allows its interaction with GATOR2 and the RAG GTPases. Functions upstream of the RAG GTPases and is required to negatively regulate mTORC1 signaling in absence of amino acids. In absence of the KICSTOR complex mTORC1 is constitutively localized to the lysosome and activated. The KICSTOR complex is also probably involved in the regulation of mTORC1 by glucose. The sequence is that of KICSTOR complex protein ITFG2 from Pongo abelii (Sumatran orangutan).